The primary structure comprises 209 residues: Small ribosomal subunit protein uS4 (209 aa).

Residues 22 to 45 (RGRNPLLRKPNPPGQHGMQRKKKS) form a disordered region. The S4 RNA-binding domain maps to 93-154 (CRLDNIVYRL…KSKRLAIVTE (62 aa)).

The protein belongs to the universal ribosomal protein uS4 family. Part of the 30S ribosomal subunit. Contacts protein S5. The interaction surface between S4 and S5 is involved in control of translational fidelity.

Its function is as follows. One of the primary rRNA binding proteins, it binds directly to 16S rRNA where it nucleates assembly of the body of the 30S subunit. In terms of biological role, with S5 and S12 plays an important role in translational accuracy. The sequence is that of Small ribosomal subunit protein uS4 from Chlamydia trachomatis serovar A (strain ATCC VR-571B / DSM 19440 / HAR-13).